Here is a 1020-residue protein sequence, read N- to C-terminus: DNA-directed RNA polymerase 2, chloroplastic/mitochondrial (1020 aa).

A disordered region spans residues Lys314–Lys336. Residues Asp721, Lys796, and Asp953 contribute to the active site.

Belongs to the phage and mitochondrial RNA polymerase family. In terms of tissue distribution, the highest levels of expression are detected in the mature leaves. The level of expression is lowest in the cotyledons.

It localises to the plastid. The protein localises to the chloroplast. The protein resides in the mitochondrion. It carries out the reaction RNA(n) + a ribonucleoside 5'-triphosphate = RNA(n+1) + diphosphate. Functionally, DNA-dependent RNA polymerase catalyzes the transcription of DNA into RNA using the four ribonucleoside triphosphates as substrates. The sequence is that of DNA-directed RNA polymerase 2, chloroplastic/mitochondrial (RPOT2) from Nicotiana sylvestris (Wood tobacco).